The sequence spans 426 residues: Mitochondrial distribution and morphology protein 12 (426 aa).

The region spanning 1–426 is the SMP-LTD domain; sequence MSIEVDWKTA…VFPSFWTFLI (426 aa). Disordered regions lie at residues 88–147, 185–264, and 346–370; these read AHGN…GTPG, WTDH…FRFP, and ADDQ…SPKR. Basic and acidic residues predominate over residues 96-109; that stretch reads THSELNEPPYRDEV. The segment covering 216-236 has biased composition (low complexity); it reads SSNPTSRPSTSSTLPSHPSGS. Basic and acidic residues-rich tracts occupy residues 244 to 264 and 349 to 360; these read SHPE…FRFP and QETRDKDDHPRS.

The protein belongs to the MDM12 family. In terms of assembly, component of the ER-mitochondria encounter structure (ERMES) or MDM complex, composed of mmm1, mdm10, mdm12 and mdm34. A mmm1 homodimer associates with one molecule of mdm12 on each side in a pairwise head-to-tail manner, and the SMP-LTD domains of mmm1 and mdm12 generate a continuous hydrophobic tunnel for phospholipid trafficking.

The protein localises to the mitochondrion outer membrane. Its subcellular location is the endoplasmic reticulum membrane. Component of the ERMES/MDM complex, which serves as a molecular tether to connect the endoplasmic reticulum (ER) and mitochondria. Components of this complex are involved in the control of mitochondrial shape and protein biogenesis, and function in nonvesicular lipid trafficking between the ER and mitochondria. Mdm12 is required for the interaction of the ER-resident membrane protein mmm1 and the outer mitochondrial membrane-resident beta-barrel protein mdm10. The mdm12-mmm1 subcomplex functions in the major beta-barrel assembly pathway that is responsible for biogenesis of all mitochondrial outer membrane beta-barrel proteins, and acts in a late step after the SAM complex. The mdm10-mdm12-mmm1 subcomplex further acts in the TOM40-specific pathway after the action of the mdm12-mmm1 complex. Essential for establishing and maintaining the structure of mitochondria and maintenance of mtDNA nucleoids. In Aspergillus terreus (strain NIH 2624 / FGSC A1156), this protein is Mitochondrial distribution and morphology protein 12.